Here is a 375-residue protein sequence, read N- to C-terminus: MQDNSQTRVVVGMSGGVDSSVVALRLKQQGYDVIGVFMKNWDDTDENGVCTATEDYKDVAKVAAKIGIPYYSVNFEKEYWDRVFTYFLDEYKKGRTPNPDVICNKEIKFKAFLDYALELGADYIATGHYAQLTRDEAGHAHLMRAVDQNKDQTYFLSQLSTEQLDRVMFPIGDLVKPQVREIAKEAGLATAEKKDSMGICFIGEKGHFKDFLKTYLPAKAGDMMTVDGEIKGHHAGLMYYTIGQRKGLGIGGDGIDNEPWFVIGKDLQKNILYVGKGYHNPHLYATHLSASDIHWVNTIDRGSDFHCTAKFRYRQKDTGVTVHLNDDGQQVTVEFDDPARAITPGQAVVFYNGDECLGSAIIDAAYNQERELQLI.

Residues 12–19 (GMSGGVDS) and methionine 38 contribute to the ATP site. The interaction with target base in tRNA stretch occupies residues 98-100 (NPD). The Nucleophile role is filled by cysteine 103. A disulfide bond links cysteine 103 and cysteine 200. Glycine 127 is a binding site for ATP. Residues 150–152 (KDQ) are interaction with tRNA. Residue cysteine 200 is the Cysteine persulfide intermediate of the active site. An interaction with tRNA region spans residues 312–313 (RY).

Belongs to the MnmA/TRMU family.

Its subcellular location is the cytoplasm. The catalysed reaction is S-sulfanyl-L-cysteinyl-[protein] + uridine(34) in tRNA + AH2 + ATP = 2-thiouridine(34) in tRNA + L-cysteinyl-[protein] + A + AMP + diphosphate + H(+). Its function is as follows. Catalyzes the 2-thiolation of uridine at the wobble position (U34) of tRNA, leading to the formation of s(2)U34. The sequence is that of tRNA-specific 2-thiouridylase MnmA from Levilactobacillus brevis (strain ATCC 367 / BCRC 12310 / CIP 105137 / JCM 1170 / LMG 11437 / NCIMB 947 / NCTC 947) (Lactobacillus brevis).